An 86-amino-acid polypeptide reads, in one-letter code: Neurotoxin 3FTx-LT (86 aa).

The signal sequence occupies residues 1–21 (MKTLLLTLVVVTIVCLDLGYT). 5 cysteine pairs are disulfide-bonded: cysteine 24–cysteine 45, cysteine 27–cysteine 32, cysteine 38–cysteine 63, cysteine 67–cysteine 78, and cysteine 79–cysteine 84.

Expressed by the venom gland.

It localises to the secreted. Functionally, binds with low affinity to muscular (alpha-1-beta-1-delta-epsilon/CHRNA1-CHRNB1-CHRND-CHRNE) and very low affinity to neuronal (alpha-7/CHRNA7) nicotinic acetylcholine receptor (nAChR). The sequence is that of Neurotoxin 3FTx-LT from Bungarus fasciatus (Banded krait).